A 678-amino-acid polypeptide reads, in one-letter code: Putative cyclic nucleotide-gated ion channel 15 (678 aa).

Over 1–81 (MGYGNSRSVR…RGQTIRRWNK (81 aa)) the chain is Cytoplasmic. The chain crosses the membrane as a helical span at residues 82–102 (IFLIACLVSLFVDPLFFFLPV). At 103-115 (MRNEACITIGVRL) the chain is on the extracellular side. Residues 116 to 136 (EVVLTLIRSLADAFYIAQILI) form a helical membrane-spanning segment. The Cytoplasmic segment spans residues 137–170 (RFRTAYIAPPSRVFGRGELVIDSRKIAWRYLHKS). A helical membrane pass occupies residues 171–191 (FWIHLVAALPLPQVLIWIIIP). Topologically, residues 192 to 203 (NLRGSPMTNTKN) are extracellular. Residues 204-224 (VLRFIIIFQYVPRMFLIFPLS) form a helical membrane-spanning segment. The Cytoplasmic portion of the chain corresponds to 225–245 (RQIIKATGVVTETAWAGAAYN). The chain crosses the membrane as a helical span at residues 246 to 266 (LMLYMLASHVLGACWYLLAVE). Residues 267–364 (RQEACWRHAC…GQNLATSTYA (98 aa)) lie on the Extracellular side of the membrane. Residues 365–385 (GEILFAIIIATLGLVLFALLI) form a helical membrane-spanning segment. The Cytoplasmic portion of the chain corresponds to 386–678 (GNMQTYLQST…KPVEPDFSSE (293 aa)). Residues 471-595 (LFDQ…TKQL) and glutamate 542 contribute to the a nucleoside 3',5'-cyclic phosphate site. The tract at residues 587–602 (FRRLHTKQLRHKFRFY) is calmodulin-binding. An IQ domain is found at 607 to 638 (RTWAACFIQAAWRRHRKRKYKTELRAKEEFHY). Over residues 656-668 (RSGSDSGMMSSIQ) the composition is skewed to polar residues. Residues 656-678 (RSGSDSGMMSSIQKPVEPDFSSE) are disordered.

This sequence belongs to the cyclic nucleotide-gated cation channel (TC 1.A.1.5) family. As to quaternary structure, homotetramer or heterotetramer.

It is found in the cell membrane. In terms of biological role, putative cyclic nucleotide-gated ion channel. This is Putative cyclic nucleotide-gated ion channel 15 (CNGC15) from Arabidopsis thaliana (Mouse-ear cress).